The following is a 226-amino-acid chain: Thiamine-phosphate synthase (226 aa).

Residues 46 to 50 (QFRDK) and Asp-83 contribute to the 4-amino-2-methyl-5-(diphosphooxymethyl)pyrimidine site. Asp-84 and Asp-103 together coordinate Mg(2+). Residue Ser-122 participates in 4-amino-2-methyl-5-(diphosphooxymethyl)pyrimidine binding. 149 to 151 (TQS) serves as a coordination point for 2-[(2R,5Z)-2-carboxy-4-methylthiazol-5(2H)-ylidene]ethyl phosphate. Lys-152 is a binding site for 4-amino-2-methyl-5-(diphosphooxymethyl)pyrimidine. 2-[(2R,5Z)-2-carboxy-4-methylthiazol-5(2H)-ylidene]ethyl phosphate is bound by residues Gly-181 and 201 to 202 (IT).

This sequence belongs to the thiamine-phosphate synthase family. Mg(2+) is required as a cofactor.

It catalyses the reaction 2-[(2R,5Z)-2-carboxy-4-methylthiazol-5(2H)-ylidene]ethyl phosphate + 4-amino-2-methyl-5-(diphosphooxymethyl)pyrimidine + 2 H(+) = thiamine phosphate + CO2 + diphosphate. The enzyme catalyses 2-(2-carboxy-4-methylthiazol-5-yl)ethyl phosphate + 4-amino-2-methyl-5-(diphosphooxymethyl)pyrimidine + 2 H(+) = thiamine phosphate + CO2 + diphosphate. The catalysed reaction is 4-methyl-5-(2-phosphooxyethyl)-thiazole + 4-amino-2-methyl-5-(diphosphooxymethyl)pyrimidine + H(+) = thiamine phosphate + diphosphate. The protein operates within cofactor biosynthesis; thiamine diphosphate biosynthesis; thiamine phosphate from 4-amino-2-methyl-5-diphosphomethylpyrimidine and 4-methyl-5-(2-phosphoethyl)-thiazole: step 1/1. Its function is as follows. Condenses 4-methyl-5-(beta-hydroxyethyl)thiazole monophosphate (THZ-P) and 2-methyl-4-amino-5-hydroxymethyl pyrimidine pyrophosphate (HMP-PP) to form thiamine monophosphate (TMP). This Haemophilus influenzae (strain 86-028NP) protein is Thiamine-phosphate synthase.